A 176-amino-acid chain; its full sequence is uncharacterized protein (176 aa).

This is an uncharacterized protein from Dictyostelium discoideum (Social amoeba).